The chain runs to 123 residues: UPF0102 protein PFL_5073 (123 aa).

It belongs to the UPF0102 family.

This chain is UPF0102 protein PFL_5073, found in Pseudomonas fluorescens (strain ATCC BAA-477 / NRRL B-23932 / Pf-5).